Here is a 79-residue protein sequence, read N- to C-terminus: Sec-independent protein translocase protein TatA (79 aa).

Residues 1–21 (MGGFTSIWHWVIVLLVIVLLF) form a helical membrane-spanning segment. Residues 48–79 (EEEAKNEPKTLDAQATQTKAHESSEIKSKQES) are disordered. Basic and acidic residues predominate over residues 66–79 (KAHESSEIKSKQES).

This sequence belongs to the TatA/E family. In terms of assembly, the Tat system comprises two distinct complexes: a TatABC complex, containing multiple copies of TatA, TatB and TatC subunits, and a separate TatA complex, containing only TatA subunits. Substrates initially bind to the TatABC complex, which probably triggers association of the separate TatA complex to form the active translocon.

It is found in the cell inner membrane. Its function is as follows. Part of the twin-arginine translocation (Tat) system that transports large folded proteins containing a characteristic twin-arginine motif in their signal peptide across membranes. TatA could form the protein-conducting channel of the Tat system. This Helicobacter pylori (strain P12) protein is Sec-independent protein translocase protein TatA.